The chain runs to 166 residues: Large ribosomal subunit protein uL10 (166 aa).

Belongs to the universal ribosomal protein uL10 family. Part of the ribosomal stalk of the 50S ribosomal subunit. The N-terminus interacts with L11 and the large rRNA to form the base of the stalk. The C-terminus forms an elongated spine to which L12 dimers bind in a sequential fashion forming a multimeric L10(L12)X complex.

Functionally, forms part of the ribosomal stalk, playing a central role in the interaction of the ribosome with GTP-bound translation factors. This Pseudomonas fluorescens (strain SBW25) protein is Large ribosomal subunit protein uL10.